The following is a 538-amino-acid chain: Dihomomethionine N-hydroxylase (538 aa).

A helical membrane pass occupies residues L8 to L28.

It belongs to the cytochrome P450 family. It depends on heme as a cofactor. As to expression, highly expressed in cotyledons, leaves, stems and siliques. Detected in flowers and lateral roots, but not in the main root. Expressed only in the vascular bundles in apical plant parts.

The protein resides in the endoplasmic reticulum membrane. The catalysed reaction is an L-polyhomomethionine + 2 reduced [NADPH--hemoprotein reductase] + 2 O2 = an (E)-omega-(methylsulfanyl)-alkanal oxime + 2 oxidized [NADPH--hemoprotein reductase] + CO2 + 3 H2O + 2 H(+). The enzyme catalyses L-dihomomethionine + 2 reduced [NADPH--hemoprotein reductase] + 2 O2 = (E)-5-(methylsulfanyl)pentanal oxime + 2 oxidized [NADPH--hemoprotein reductase] + CO2 + 3 H2O + 2 H(+). It carries out the reaction L-trihomomethionine + 2 reduced [NADPH--hemoprotein reductase] + 2 O2 = (E)-6-(methylsulfanyl)hexanal oxime + 2 oxidized [NADPH--hemoprotein reductase] + CO2 + 3 H2O + 2 H(+). In terms of biological role, catalyzes the conversion of the short chain elongated methionines di-, tri-, and tetrahomomethionine to their respective aldoximes 5-methylthiopentanaldoxime, 6-methylthiohexanaldoxime, and 7-methylheptanaldoxime. The polypeptide is Dihomomethionine N-hydroxylase (CYP79F1) (Arabidopsis thaliana (Mouse-ear cress)).